A 245-amino-acid polypeptide reads, in one-letter code: Tetraspanin-6 (245 aa).

Topologically, residues 1–19 are cytoplasmic; that stretch reads MASPSRRLQTKPVITCLKS. Residues 20 to 40 traverse the membrane as a helical segment; the sequence is VLLIYTFIFWITGVILLAVGI. Topologically, residues 41-59 are extracellular; sequence WGKVSLENYFSLLNEKATN. Residues 60–80 form a helical membrane-spanning segment; sequence VPFVLIGTGTVIILLGTFGCF. The Cytoplasmic segment spans residues 81-93; it reads ATCRTSAWMLKLY. The helical transmembrane segment at 94–114 threads the bilayer; it reads AMFLTLIFLVELVAAIVGFVF. Residues 115–208 are Extracellular-facing; the sequence is RHEIKNSFKS…IKVMTTIESE (94 aa). The N-linked (GlcNAc...) asparagine glycan is linked to asparagine 134. A helical transmembrane segment spans residues 209–229; it reads MGVVAGISFGVACFQLIGIFL. Over 230-245 the chain is Cytoplasmic; it reads AYCLSRAITNNQYEIV.

It belongs to the tetraspanin (TM4SF) family.

The protein localises to the membrane. This Mus musculus (Mouse) protein is Tetraspanin-6 (Tspan6).